The chain runs to 182 residues: MLQALLIFVLQIIYVPILTIRTILLVKNQTRSAAAVGLLEGAIYIVSLGIVFQDLSNWMNIVAYVIGFSAGLLLGGYIENKLAIGYITYQVSLLDRCNELVDELRHSGFGVTVFEGEGINSIRYRLDIVAKRSREKELLEIINEIAPKAFMSSYEIRSFKGGYLTKAMKKRALMKKKDHHAS.

3 helical membrane-spanning segments follow: residues 6–26, 32–52, and 58–78; these read LIFV…ILLV, SAAA…GIVF, and WMNI…GGYI.

The protein belongs to the UPF0316 family.

Its subcellular location is the cell membrane. The sequence is that of UPF0316 protein BCQ_3166 from Bacillus cereus (strain Q1).